Here is a 606-residue protein sequence, read N- to C-terminus: Threonine dehydratase 1 biosynthetic, chloroplastic (606 aa).

Residue Lys154 is modified to N6-(pyridoxal phosphate)lysine. 2 ACT-like domains span residues 432–504 (AVLA…NLTD) and 526–597 (LLCR…MESL).

It belongs to the serine/threonine dehydratase family. Pyridoxal 5'-phosphate serves as cofactor. As to expression, expressed constitutively in all tissues examined including root, stem, petiole, leaf, immature flower bud, unopened flower and opened flower with the highest expression in opened flower and lowest in leaf.

It is found in the plastid. The protein localises to the chloroplast. The catalysed reaction is L-threonine = 2-oxobutanoate + NH4(+). The protein operates within amino-acid biosynthesis; L-isoleucine biosynthesis; 2-oxobutanoate from L-threonine: step 1/1. With respect to regulation, strongly inhibited by 1 mM isoleucine. Functionally, has a housekeeping role in isoleucine biosynthesis. This is Threonine dehydratase 1 biosynthetic, chloroplastic from Solanum lycopersicum (Tomato).